Here is a 184-residue protein sequence, read N- to C-terminus: ATP synthase subunit b, chloroplastic (184 aa).

A helical transmembrane segment spans residues 29 to 49; the sequence is INIINLGIVIGLLVYLGEGVL.

Belongs to the ATPase B chain family. In terms of assembly, F-type ATPases have 2 components, F(1) - the catalytic core - and F(0) - the membrane proton channel. F(1) has five subunits: alpha(3), beta(3), gamma(1), delta(1), epsilon(1). F(0) has four main subunits: a(1), b(1), b'(1) and c(10-14). The alpha and beta chains form an alternating ring which encloses part of the gamma chain. F(1) is attached to F(0) by a central stalk formed by the gamma and epsilon chains, while a peripheral stalk is formed by the delta, b and b' chains.

The protein localises to the plastid. It localises to the chloroplast thylakoid membrane. Its function is as follows. F(1)F(0) ATP synthase produces ATP from ADP in the presence of a proton or sodium gradient. F-type ATPases consist of two structural domains, F(1) containing the extramembraneous catalytic core and F(0) containing the membrane proton channel, linked together by a central stalk and a peripheral stalk. During catalysis, ATP synthesis in the catalytic domain of F(1) is coupled via a rotary mechanism of the central stalk subunits to proton translocation. Functionally, component of the F(0) channel, it forms part of the peripheral stalk, linking F(1) to F(0). This Psilotum nudum (Whisk fern) protein is ATP synthase subunit b, chloroplastic.